The chain runs to 162 residues: NADH-quinone oxidoreductase subunit I (162 aa).

2 consecutive 4Fe-4S ferredoxin-type domains span residues 53 to 83 (QRRYANGEERCIACKLCEAVCPAMAISIESE) and 93 to 122 (SRYDIDLTKCIFCGFCEEACPVDAIVETHI). The [4Fe-4S] cluster site is built by Cys63, Cys66, Cys69, Cys73, Cys102, Cys105, Cys108, and Cys112.

Belongs to the complex I 23 kDa subunit family. As to quaternary structure, NDH-1 is composed of 14 different subunits. Subunits NuoA, H, J, K, L, M, N constitute the membrane sector of the complex. The cofactor is [4Fe-4S] cluster.

The protein resides in the cell inner membrane. The enzyme catalyses a quinone + NADH + 5 H(+)(in) = a quinol + NAD(+) + 4 H(+)(out). NDH-1 shuttles electrons from NADH, via FMN and iron-sulfur (Fe-S) centers, to quinones in the respiratory chain. The immediate electron acceptor for the enzyme in this species is believed to be ubiquinone. Couples the redox reaction to proton translocation (for every two electrons transferred, four hydrogen ions are translocated across the cytoplasmic membrane), and thus conserves the redox energy in a proton gradient. This is NADH-quinone oxidoreductase subunit I from Chromobacterium violaceum (strain ATCC 12472 / DSM 30191 / JCM 1249 / CCUG 213 / NBRC 12614 / NCIMB 9131 / NCTC 9757 / MK).